We begin with the raw amino-acid sequence, 503 residues long: Probable cytosol aminopeptidase (503 aa).

Residues Lys-271 and Asp-276 each contribute to the Mn(2+) site. Lys-283 is a catalytic residue. Residues Asp-294, Asp-353, and Glu-355 each contribute to the Mn(2+) site. Arg-357 is an active-site residue.

The protein belongs to the peptidase M17 family. Requires Mn(2+) as cofactor.

It localises to the cytoplasm. It catalyses the reaction Release of an N-terminal amino acid, Xaa-|-Yaa-, in which Xaa is preferably Leu, but may be other amino acids including Pro although not Arg or Lys, and Yaa may be Pro. Amino acid amides and methyl esters are also readily hydrolyzed, but rates on arylamides are exceedingly low.. It carries out the reaction Release of an N-terminal amino acid, preferentially leucine, but not glutamic or aspartic acids.. In terms of biological role, presumably involved in the processing and regular turnover of intracellular proteins. Catalyzes the removal of unsubstituted N-terminal amino acids from various peptides. This chain is Probable cytosol aminopeptidase, found in Chlorobaculum parvum (strain DSM 263 / NCIMB 8327) (Chlorobium vibrioforme subsp. thiosulfatophilum).